A 232-amino-acid chain; its full sequence is GDT1-like protein 5 (232 aa).

Transmembrane regions (helical) follow at residues 13–33 (LAMT…AILA), 40–60 (LVLA…VSLG), 72–92 (THHV…WEGF), 135–155 (PFVL…TFFG), 175–195 (FGVV…AVMG), and 207–227 (MVGL…YLSG).

The protein belongs to the GDT1 family.

The protein resides in the membrane. This Oryza sativa subsp. japonica (Rice) protein is GDT1-like protein 5.